A 302-amino-acid chain; its full sequence is Deoxyhypusine hydroxylase (302 aa).

M1 is subject to N-acetylmethionine. HEAT-like PBS-type repeat units follow at residues 54–80 (LKHE…VLQD), 87–113 (VRHE…YSTD), 175–201 (ERYR…GLKC), 206–232 (FRHE…TLAR), and 239–265 (VRHE…YITD). Fe cation is bound by residues H56, H89, and E90. Residues H208, H241, and E242 each coordinate Fe cation.

The protein belongs to the deoxyhypusine hydroxylase family. It depends on Fe(2+) as a cofactor.

The enzyme catalyses [eIF5A protein]-deoxyhypusine + AH2 + O2 = [eIF5A protein]-hypusine + A + H2O. The protein operates within protein modification; eIF5A hypusination. Its function is as follows. Catalyzes the hydroxylation of the N(6)-(4-aminobutyl)-L-lysine intermediate produced by deoxyhypusine synthase/DHPS on a critical lysine of the eukaryotic translation initiation factor 5A/eIF-5A. This is the second step of the post-translational modification of that lysine into an unusual amino acid residue named hypusine. Hypusination is unique to mature eIF-5A factor and is essential for its function. The chain is Deoxyhypusine hydroxylase (Dohh) from Rattus norvegicus (Rat).